We begin with the raw amino-acid sequence, 194 residues long: tRNA (mnm(5)s(2)U34)-methyltransferase (194 aa).

S-adenosyl-L-methionine is bound by residues His-33, Asp-34, Asp-52, Gln-54, Ser-79, and His-80.

This sequence belongs to the methyltransferase superfamily. MnmM family. As to quaternary structure, homodimer.

It catalyses the reaction 5-aminomethyl-2-thiouridine(34) in tRNA + S-adenosyl-L-methionine = 5-methylaminomethyl-2-thiouridine(34) in tRNA + S-adenosyl-L-homocysteine + H(+). Its pathway is tRNA modification. In terms of biological role, involved in the biosynthesis of 5-methylaminomethyl-2-thiouridine (mnm(5)s(2)U) at the wobble position (U34) in tRNA. Catalyzes the transfer of a methyl group from S-adenosyl-L-methionine to nm(5)s(2)U34 to form mnm(5)s(2)U34. This Bacillus subtilis (strain 168) protein is tRNA (mnm(5)s(2)U34)-methyltransferase.